A 233-amino-acid chain; its full sequence is Aspartate/glutamate leucyltransferase (233 aa).

It belongs to the R-transferase family. Bpt subfamily.

The protein localises to the cytoplasm. It catalyses the reaction N-terminal L-glutamyl-[protein] + L-leucyl-tRNA(Leu) = N-terminal L-leucyl-L-glutamyl-[protein] + tRNA(Leu) + H(+). The enzyme catalyses N-terminal L-aspartyl-[protein] + L-leucyl-tRNA(Leu) = N-terminal L-leucyl-L-aspartyl-[protein] + tRNA(Leu) + H(+). Its function is as follows. Functions in the N-end rule pathway of protein degradation where it conjugates Leu from its aminoacyl-tRNA to the N-termini of proteins containing an N-terminal aspartate or glutamate. This is Aspartate/glutamate leucyltransferase from Vibrio campbellii (strain ATCC BAA-1116).